We begin with the raw amino-acid sequence, 952 residues long: UvrABC system protein A (952 aa).

38 to 45 (GLSGSGKS) provides a ligand contact to ATP. The segment at 258 to 285 (CNECGFSIPELEPRFFSFNSPVGACKSC) adopts a C4-type zinc-finger fold. 2 ABC transporter domains span residues 315 to 596 (FRSV…KKSI) and 616 to 945 (GNGK…LFLE). Residue 648 to 655 (GVSGSGKS) participates in ATP binding. A C4-type zinc finger spans residues 747–773 (CENCSGDGLIKIEMHFLPDVFVKCESC).

It belongs to the ABC transporter superfamily. UvrA family. In terms of assembly, forms a heterotetramer with UvrB during the search for lesions.

The protein resides in the cytoplasm. In terms of biological role, the UvrABC repair system catalyzes the recognition and processing of DNA lesions. UvrA is an ATPase and a DNA-binding protein. A damage recognition complex composed of 2 UvrA and 2 UvrB subunits scans DNA for abnormalities. When the presence of a lesion has been verified by UvrB, the UvrA molecules dissociate. In Malacoplasma penetrans (strain HF-2) (Mycoplasma penetrans), this protein is UvrABC system protein A.